The chain runs to 212 residues: Probable chemoreceptor glutamine deamidase CheD (212 aa).

The protein belongs to the CheD family.

The enzyme catalyses L-glutaminyl-[protein] + H2O = L-glutamyl-[protein] + NH4(+). Probably deamidates glutamine residues to glutamate on methyl-accepting chemotaxis receptors (MCPs), playing an important role in chemotaxis. This chain is Probable chemoreceptor glutamine deamidase CheD, found in Oleidesulfovibrio alaskensis (strain ATCC BAA-1058 / DSM 17464 / G20) (Desulfovibrio alaskensis).